The primary structure comprises 86 residues: Omega-theraphotoxin-Hhn1c (86 aa).

The first 21 residues, 1–21 (MKSIVFVALFGLALLAVVCSA), serve as a signal peptide directing secretion. The propeptide occupies 22 to 50 (SEDAHKELLKEVVRAMVVDKTDAVQAEER). Disulfide bonds link Cys-52-Cys-66, Cys-59-Cys-71, and Cys-65-Cys-78.

The protein belongs to the neurotoxin 10 (Hwtx-1) family. 17 (Hntx-9) subfamily. As to expression, expressed by the venom gland.

The protein resides in the secreted. Functionally, ion channel inhibitor. The chain is Omega-theraphotoxin-Hhn1c from Cyriopagopus hainanus (Chinese bird spider).